A 145-amino-acid polypeptide reads, in one-letter code: MFIGTYNHSIDSKNRMLVPSKVKATLGEAIFVYLSLGFDGNIDMRLESEFNQFVNNINNLLIGSKEARNLTRLILSQTYKIEIDSASRILIPQNLIDKAKIKKDIYIIGTNDRYEIWAKEVYDDFSLNQESTLSDLAEKLLINGI.

2 consecutive SpoVT-AbrB domains span residues 5–49 and 78–121; these read TYNH…LESE and TYKI…AKEV.

The protein belongs to the MraZ family. In terms of assembly, forms oligomers.

It localises to the cytoplasm. Its subcellular location is the nucleoid. The chain is Transcriptional regulator MraZ from Ureaplasma parvum serovar 3 (strain ATCC 27815 / 27 / NCTC 11736).